A 221-amino-acid polypeptide reads, in one-letter code: Vesicle transport v-SNARE 13 (221 aa).

At 1–198 (MSQGFERYER…MTRRMNRNKW (198 aa)) the chain is on the cytoplasmic side. The stretch at 32-93 (EQKKQNLSEI…FKTEVKRITS (62 aa)) forms a coiled coil. The chain crosses the membrane as a helical; Anchor for type IV membrane protein span at residues 199–219 (TIGAIITVLVLAIIFILYFKL). Over 220–221 (TR) the chain is Vesicular.

The protein belongs to the VTI1 family. Forms SNARE complexes with t-SNAREs. In terms of tissue distribution, expressed at low levels in roots, stems, flowers and leaves.

The protein resides in the vacuole membrane. Its subcellular location is the prevacuolar compartment membrane. It localises to the endosome membrane. It is found in the early endosome membrane. Functionally, may function as a v-SNARE responsible for targeting vesicles involved in the secretory pathway. Involved in actin-dependent endosomal trafficking pathways associated with the vacuole within root hairs and root tip epidermal cells. Essential for cell wall organization and polarized root hair growth. Also required for the localization of SYP41 to the trans-Golgi network in root hair cells. The chain is Vesicle transport v-SNARE 13 from Arabidopsis thaliana (Mouse-ear cress).